A 418-amino-acid chain; its full sequence is Gamma-glutamyl phosphate reductase (418 aa).

It belongs to the gamma-glutamyl phosphate reductase family.

The protein resides in the cytoplasm. The catalysed reaction is L-glutamate 5-semialdehyde + phosphate + NADP(+) = L-glutamyl 5-phosphate + NADPH + H(+). It functions in the pathway amino-acid biosynthesis; L-proline biosynthesis; L-glutamate 5-semialdehyde from L-glutamate: step 2/2. Catalyzes the NADPH-dependent reduction of L-glutamate 5-phosphate into L-glutamate 5-semialdehyde and phosphate. The product spontaneously undergoes cyclization to form 1-pyrroline-5-carboxylate. In Geobacter sulfurreducens (strain ATCC 51573 / DSM 12127 / PCA), this protein is Gamma-glutamyl phosphate reductase.